Here is a 385-residue protein sequence, read N- to C-terminus: Endoglucanase 1 (385 aa).

Residues 1-17 form the signal peptide; sequence MKLVFSALASLLSGASA. Residues N93 and N140 are each glycosylated (N-linked (GlcNAc...) asparagine). Residue E176 is the Proton donor of the active site. 2 N-linked (GlcNAc...) asparagine glycosylation sites follow: N200 and N237. E284 functions as the Nucleophile in the catalytic mechanism. Residues N289 and N331 are each glycosylated (N-linked (GlcNAc...) asparagine).

The protein belongs to the glycosyl hydrolase 5 (cellulase A) family.

The catalysed reaction is Endohydrolysis of (1-&gt;4)-beta-D-glucosidic linkages in cellulose, lichenin and cereal beta-D-glucans.. Its pathway is glycan metabolism; cellulose degradation. In terms of biological role, active towards carboxymethyl cellulose. The polypeptide is Endoglucanase 1 (eg 1) (Robillarda sp. (strain Y-20)).